Here is a 986-residue protein sequence, read N- to C-terminus: Translation initiation factor IF-2 (986 aa).

The segment covering 49-59 has biased composition (basic and acidic residues); it reads EFAKDNAKGDS. Residues 49–370 form a disordered region; the sequence is EFAKDNAKGD…KNRLAKRHEY (322 aa). The span at 60–112 shows a compositional bias: low complexity; that stretch reads KPASSAQKPAAKPVQQRRPAAPSAPASTSSSAPTPAAPARQASPASAHQQAPT. The segment covering 135 to 168 has biased composition (basic and acidic residues); that stretch reads GQHDNRENGRDNREGRENGRQSRPNDRRNNDRRN. Over residues 170 to 182 the composition is skewed to low complexity; the sequence is QGRPNNGQPGQHQ. Gly residues-rich tracts occupy residues 254-286 and 296-353; these read GRGG…GGPR and GQGG…GRQG. The span at 357–366 shows a compositional bias: basic residues; that stretch reads SKARKNRLAK. The tr-type G domain occupies 479–651; that stretch reads PRPPVVTVMG…VLLTADAELD (173 aa). The interval 488-495 is G1; that stretch reads GHVDHGKT. Position 488-495 (488-495) interacts with GTP; it reads GHVDHGKT. Residues 513–517 are G2; that stretch reads GITQR. A G3 region spans residues 538–541; sequence DTPG. GTP-binding positions include 538–542 and 592–595; these read DTPGH and NKID. Positions 592–595 are G4; the sequence is NKID. A G5 region spans residues 628–630; it reads SAK.

Belongs to the TRAFAC class translation factor GTPase superfamily. Classic translation factor GTPase family. IF-2 subfamily.

Its subcellular location is the cytoplasm. Functionally, one of the essential components for the initiation of protein synthesis. Protects formylmethionyl-tRNA from spontaneous hydrolysis and promotes its binding to the 30S ribosomal subunits. Also involved in the hydrolysis of GTP during the formation of the 70S ribosomal complex. This Bifidobacterium longum subsp. infantis (strain ATCC 15697 / DSM 20088 / JCM 1222 / NCTC 11817 / S12) protein is Translation initiation factor IF-2.